Consider the following 162-residue polypeptide: Small ribosomal subunit protein uS13 (162 aa).

The disordered stretch occupies residues 142-162 (RGQRTKSTGRRGSTVGVSRKK).

It belongs to the universal ribosomal protein uS13 family. Part of the 30S ribosomal subunit. Forms a loose heterodimer with protein S19. Forms two bridges to the 50S subunit in the 70S ribosome.

Located at the top of the head of the 30S subunit, it contacts several helices of the 16S rRNA. In the 70S ribosome it contacts the 23S rRNA (bridge B1a) and protein L5 of the 50S subunit (bridge B1b), connecting the 2 subunits; these bridges are implicated in subunit movement. The polypeptide is Small ribosomal subunit protein uS13 (Methanosarcina acetivorans (strain ATCC 35395 / DSM 2834 / JCM 12185 / C2A)).